The chain runs to 190 residues: Ras-related protein RabF1 (190 aa).

Residue 15–22 coordinates GTP; it reads GDSGVGKT. Positions 37–44 match the Effector region motif; that stretch reads HITIGIEF. GTP is bound by residues 62–66 and 119–122; these read DTAGE and NKND. A Cysteine methyl ester modification is found at Cys187. Cys187 is lipidated: S-geranylgeranyl cysteine. The propeptide at 188-190 is removed in mature form; it reads IIN.

Belongs to the small GTPase superfamily. Rab family.

The protein localises to the cell membrane. In Dictyostelium discoideum (Social amoeba), this protein is Ras-related protein RabF1 (rabF1-1).